A 639-amino-acid polypeptide reads, in one-letter code: C-type lectin domain-containing protein 160 (639 aa).

A signal peptide spans 1–19 (MDLKSWILLSCTLLPLSVT). VWFA domains are found at residues 31 to 178 (DIII…VGIG) and 289 to 474 (DIIF…LCQV). Residues 491–618 (KYGECFFPTK…WNSVSCTSEY (128 aa)) form the C-type lectin domain. An intrachain disulfide couples Cys594 to Cys614.

It localises to the secreted. This is C-type lectin domain-containing protein 160 (clec-160) from Caenorhabditis elegans.